Consider the following 373-residue polypeptide: NADH-quinone oxidoreductase subunit D (373 aa).

Belongs to the complex I 49 kDa subunit family. NDH-1 is composed of 14 different subunits. Subunits NuoB, C, D, E, F, and G constitute the peripheral sector of the complex.

It localises to the cell inner membrane. The enzyme catalyses a quinone + NADH + 5 H(+)(in) = a quinol + NAD(+) + 4 H(+)(out). Functionally, NDH-1 shuttles electrons from NADH, via FMN and iron-sulfur (Fe-S) centers, to quinones in the respiratory chain. The immediate electron acceptor for the enzyme in this species is believed to be ubiquinone. Couples the redox reaction to proton translocation (for every two electrons transferred, four hydrogen ions are translocated across the cytoplasmic membrane), and thus conserves the redox energy in a proton gradient. This Syntrophobacter fumaroxidans (strain DSM 10017 / MPOB) protein is NADH-quinone oxidoreductase subunit D.